Here is a 753-residue protein sequence, read N- to C-terminus: Lysyl oxidase homolog 3 (753 aa).

The first 25 residues, 1–25, serve as a signal peptide directing secretion; sequence MRPVSVWQWSPWGLLLCLLCSSCLG. 2 consecutive SRCR domains span residues 44-145 and 169-282; these read FRLA…VICK and VRIR…VSCV. Disulfide bonds link Cys-70/Cys-134, Cys-83/Cys-144, Cys-114/Cys-124, Cys-201/Cys-271, Cys-214/Cys-281, and Cys-248/Cys-258. Asn-111 carries an N-linked (GlcNAc...) asparagine glycan. Residue Asn-266 is glycosylated (N-linked (GlcNAc...) asparagine). Over residues 290–302 the composition is skewed to low complexity; sequence SSGQKKQQQSKPQ. Positions 290–315 are disordered; the sequence is SSGQKKQQQSKPQGEARVRLKGGAHP. SRCR domains lie at 307 to 407 and 417 to 525; these read VRLK…VRCN and IRLS…VICS. 11 disulfide bridges follow: Cys-332/Cys-396, Cys-345/Cys-406, Cys-376/Cys-386, Cys-446/Cys-511, Cys-459/Cys-524, Cys-492/Cys-502, Cys-554/Cys-560, Cys-606/Cys-654, Cys-638/Cys-644, Cys-666/Cys-676, and Cys-713/Cys-727. N-linked (GlcNAc...) asparagine glycans are attached at residues Asn-390 and Asn-481. A lysyl-oxidase like region spans residues 529-732; that stretch reads SDLLLHSALV…WVHNCHIGDA (204 aa). Positions 607, 609, and 611 each coordinate Cu cation. Asn-625 carries an N-linked (GlcNAc...) asparagine glycan. The lysine tyrosylquinone (Lys-Tyr) cross-link spans 634 to 670; the sequence is KASFCLEDTECQEDVSKRYECANFGEQGITVGCWDLY. At Tyr-670 the chain carries 2',4',5'-topaquinone.

It belongs to the lysyl oxidase family. In terms of assembly, interacts with STAT3. The cofactor is Cu cation. Requires lysine tyrosylquinone residue as cofactor. In terms of processing, the lysine tyrosylquinone cross-link (LTQ) is generated by condensation of the epsilon-amino group of a lysine with a topaquinone produced by oxidation of tyrosine. As to expression, isoform 1: Predominantly detected in the heart, placenta, lung, and small intestine. Isoform 2: Highly detected in the kidney, pancreas, spleen, and thymus, and is absent in lung. In eye, present in all layers of corneas as well as in the limbus and conjunctiva (at protein level).

The protein resides in the secreted. It localises to the extracellular space. Its subcellular location is the cytoplasm. The protein localises to the nucleus. The catalysed reaction is L-lysyl-[protein] + O2 + H2O = (S)-2-amino-6-oxohexanoyl-[protein] + H2O2 + NH4(+). The enzyme catalyses N(6)-acetyl-L-lysyl-[protein] + O2 + H2O = acetamide + (S)-2-amino-6-oxohexanoyl-[protein] + H2O2. Protein-lysine 6-oxidase that mediates the oxidation of peptidyl lysine residues to allysine in target proteins. Catalyzes the post-translational oxidative deamination of peptidyl lysine residues in precursors of elastin and different types of collagens, a prerequisite in the formation of cross-links between collagens and elastin. Required for somite boundary formation by catalyzing oxidation of fibronectin (FN1), enhancing integrin signaling in myofibers and their adhesion to the myotendinous junction (MTJ). Acts as a regulator of inflammatory response by inhibiting differentiation of naive CD4(+) T-cells into T-helper Th17 or regulatory T-cells (Treg): acts by interacting with STAT3 in the nucleus and catalyzing both deacetylation and oxidation of lysine residues on STAT3, leading to disrupt STAT3 dimerization and inhibit STAT3 transcription activity. Oxidation of lysine residues to allysine on STAT3 preferentially takes place on lysine residues that are acetylated. Also able to catalyze deacetylation of lysine residues on STAT3. Functionally, shows protein-lysine 6-oxidase activity toward elastin and different types of collagens, with the highest activity toward collagen type VIII. In terms of biological role, shows protein-lysine 6-oxidase activity toward elastin and different types of collagens, with the highest activity toward collagen type IV. The protein is Lysyl oxidase homolog 3 of Homo sapiens (Human).